Consider the following 267-residue polypeptide: Thiamine pyrophosphokinase 3 (267 aa).

It belongs to the thiamine pyrophosphokinase family.

It localises to the cytoplasm. Its subcellular location is the cytosol. It catalyses the reaction thiamine + ATP = thiamine diphosphate + AMP + H(+). It functions in the pathway cofactor biosynthesis; thiamine diphosphate biosynthesis; thiamine diphosphate from thiamine: step 1/1. Functionally, catalyzes the phosphorylation of thiamine to thiamine pyrophosphate (TPP). TPP is an active cofactor for enzymes involved in glycolysis and energy production. Plant leaves require high levels of TPP for photosynthesis and carbohydrate metabolism. The polypeptide is Thiamine pyrophosphokinase 3 (TPK3) (Oryza sativa subsp. japonica (Rice)).